Reading from the N-terminus, the 1090-residue chain is Protein unc-13 homolog D (1090 aa).

Positions Glu92 to Gln239 constitute a C2 1 domain. Ca(2+)-binding residues include Asp127 and Asp133. Ser150 is subject to Phosphoserine. Positions 206 and 208 each coordinate Ca(2+). Residues Asp240–Val543 are interaction with RAB27A. The 121-residue stretch at Phe557–Ile677 folds into the MHD1 domain. The 108-residue stretch at Glu788 to Tyr895 folds into the MHD2 domain. Positions Glu910 to Gly1035 constitute a C2 2 domain. Residues Leu940, Asp941, Asp947, Asp1005, Asp1007, and Asp1013 each contribute to the Ca(2+) site. Residues Pro1026 to Ala1048 are disordered.

It belongs to the unc-13 family. In terms of assembly, interacts with DOC2A. Interacts with RAB27A. Interacts with RHOG; the interaction increases RhoG affinity to the membrane lipids, targets UNC13D to membrane lipids and facilitates cytotoxic granule (CG) docking to the plasma membrane. It depends on Ca(2+) as a cofactor. As to expression, expressed at high levels in spleen, thymus and leukocytes. Also expressed in lung and placenta, and at very low levels in brain, heart, skeletal muscle and kidney. Expressed in cytotoxic T-lymphocytes (CTL) and mast cells.

The protein resides in the cytoplasm. Its subcellular location is the membrane. It localises to the late endosome. It is found in the recycling endosome. The protein localises to the lysosome. In terms of biological role, plays a role in cytotoxic granule exocytosis in lymphocytes. Required for both granule maturation and granule docking and priming at the immunologic synapse. Regulates assembly of recycling and late endosomal structures, leading to the formation of an endosomal exocytic compartment that fuses with perforin-containing granules at the immunologic synapse and licences them for exocytosis. Regulates Ca(2+)-dependent secretory lysosome exocytosis in mast cells. This is Protein unc-13 homolog D (UNC13D) from Homo sapiens (Human).